A 309-amino-acid chain; its full sequence is Porphobilinogen deaminase (309 aa).

The residue at position 240 (Cys240) is an S-(dipyrrolylmethanemethyl)cysteine.

It belongs to the HMBS family. Monomer. Requires dipyrromethane as cofactor.

It catalyses the reaction 4 porphobilinogen + H2O = hydroxymethylbilane + 4 NH4(+). Its pathway is porphyrin-containing compound metabolism; protoporphyrin-IX biosynthesis; coproporphyrinogen-III from 5-aminolevulinate: step 2/4. Tetrapolymerization of the monopyrrole PBG into the hydroxymethylbilane pre-uroporphyrinogen in several discrete steps. The chain is Porphobilinogen deaminase from Brevibacillus brevis (strain 47 / JCM 6285 / NBRC 100599).